The chain runs to 157 residues: ATP synthase subunit b 1 (157 aa).

A helical transmembrane segment spans residues 7-29; the sequence is LFGQMVTFALLVWFTMKYVWPPL.

Belongs to the ATPase B chain family. As to quaternary structure, F-type ATPases have 2 components, F(1) - the catalytic core - and F(0) - the membrane proton channel. F(1) has five subunits: alpha(3), beta(3), gamma(1), delta(1), epsilon(1). F(0) has three main subunits: a(1), b(2) and c(10-14). The alpha and beta chains form an alternating ring which encloses part of the gamma chain. F(1) is attached to F(0) by a central stalk formed by the gamma and epsilon chains, while a peripheral stalk is formed by the delta and b chains.

The protein resides in the cell inner membrane. F(1)F(0) ATP synthase produces ATP from ADP in the presence of a proton or sodium gradient. F-type ATPases consist of two structural domains, F(1) containing the extramembraneous catalytic core and F(0) containing the membrane proton channel, linked together by a central stalk and a peripheral stalk. During catalysis, ATP synthesis in the catalytic domain of F(1) is coupled via a rotary mechanism of the central stalk subunits to proton translocation. Functionally, component of the F(0) channel, it forms part of the peripheral stalk, linking F(1) to F(0). The chain is ATP synthase subunit b 1 from Methylococcus capsulatus (strain ATCC 33009 / NCIMB 11132 / Bath).